The sequence spans 408 residues: Putative F-box protein At1g53550 (408 aa).

In terms of domain architecture, F-box spans 29–74 (TCYFDPIPVDLVINILSRLSLECIARCRCVSKLWSSIIRRPNYNQL).

The chain is Putative F-box protein At1g53550 from Arabidopsis thaliana (Mouse-ear cress).